Here is a 358-residue protein sequence, read N- to C-terminus: Ribosomal RNA large subunit methyltransferase M (358 aa).

S-adenosyl-L-methionine is bound by residues Ser-191, 224 to 227 (APGG), Asp-243, Asp-263, and Asp-279. Lys-308 acts as the Proton acceptor in catalysis.

This sequence belongs to the class I-like SAM-binding methyltransferase superfamily. RNA methyltransferase RlmE family. RlmM subfamily. In terms of assembly, monomer.

The protein resides in the cytoplasm. The enzyme catalyses cytidine(2498) in 23S rRNA + S-adenosyl-L-methionine = 2'-O-methylcytidine(2498) in 23S rRNA + S-adenosyl-L-homocysteine + H(+). Functionally, catalyzes the 2'-O-methylation at nucleotide C2498 in 23S rRNA. The polypeptide is Ribosomal RNA large subunit methyltransferase M (Marinobacter nauticus (strain ATCC 700491 / DSM 11845 / VT8) (Marinobacter aquaeolei)).